The sequence spans 827 residues: Striatin homolog (827 aa).

Positions Arg-37–Lys-109 form a coiled coil. 4 disordered regions span residues Lys-99–Asn-123, Lys-181–Ser-270, Ser-311–Ser-362, and Glu-400–Met-459. Basic and acidic residues predominate over residues Lys-109–Asn-123. Low complexity-rich tracts occupy residues Asn-184–Ser-270 and Ser-311–Gln-334. Over residues Glu-337–Lys-346 the composition is skewed to polar residues. 3 stretches are compositionally biased toward low complexity: residues Gln-347–Gln-356, Thr-416–Ser-432, and Ser-439–Thr-453. WD repeat units follow at residues Ser-495–Lys-534, Gly-548–Tyr-593, Gly-610–Thr-649, Asn-709–Ser-748, Ala-751–Asp-790, and Lys-797–Asn-827.

It belongs to the WD repeat striatin family. Part of the core of STRIPAK complexes.

The protein localises to the cytoplasm. Its subcellular location is the membrane. Calmodulin-binding scaffolding protein which is the center of the striatin-interacting phosphatase and kinase (STRIPAK) complexes. STRIPAK complexes have critical roles in protein (de)phosphorylation and are regulators of multiple signaling pathways including Hippo, MAPK, nuclear receptor and cytoskeleton remodeling. Different types of STRIPAK complexes are involved in a variety of biological processes such as cell growth, differentiation, apoptosis, metabolism and immune regulation. The polypeptide is Striatin homolog (strn) (Dictyostelium discoideum (Social amoeba)).